A 129-amino-acid chain; its full sequence is Small ribosomal subunit protein uS9 (129 aa).

It belongs to the universal ribosomal protein uS9 family.

The sequence is that of Small ribosomal subunit protein uS9 from Chlorobium limicola (strain DSM 245 / NBRC 103803 / 6330).